The primary structure comprises 109 residues: Small ribosomal subunit protein uS10c (109 aa).

It belongs to the universal ribosomal protein uS10 family. Part of the 30S ribosomal subunit.

Its subcellular location is the plastid. The protein localises to the chloroplast. Its function is as follows. Involved in the binding of tRNA to the ribosomes. The sequence is that of Small ribosomal subunit protein uS10c from Cyanidium caldarium (Red alga).